A 281-amino-acid polypeptide reads, in one-letter code: uncharacterized protein (281 aa).

Helical transmembrane passes span 30–50, 54–74, 76–96, 106–126, 153–173, 198–218, 235–255, and 259–279; these read AIVA…FIVI, VFIS…GYYF, FNPL…MGWV, TLIG…IDLT, AGLD…FLAI, IALT…IALL, MMAV…ALSY, and LSSG…SLAF.

It belongs to the ABC-3 integral membrane protein family.

Its subcellular location is the cell membrane. This is an uncharacterized protein from Synechocystis sp. (strain ATCC 27184 / PCC 6803 / Kazusa).